A 219-amino-acid polypeptide reads, in one-letter code: tRNA (guanine-N(7)-)-methyltransferase (219 aa).

4 residues coordinate S-adenosyl-L-methionine: Glu-43, Asp-68, Glu-101, and Asn-124. Substrate is bound by residues Lys-128 and Asp-160.

It belongs to the class I-like SAM-binding methyltransferase superfamily. TrmB family.

It carries out the reaction guanosine(46) in tRNA + S-adenosyl-L-methionine = N(7)-methylguanosine(46) in tRNA + S-adenosyl-L-homocysteine. Its pathway is tRNA modification; N(7)-methylguanine-tRNA biosynthesis. Functionally, catalyzes the formation of N(7)-methylguanine at position 46 (m7G46) in tRNA. The polypeptide is tRNA (guanine-N(7)-)-methyltransferase (Clostridium botulinum (strain Alaska E43 / Type E3)).